A 729-amino-acid chain; its full sequence is Solute carrier family 15 member 2 (729 aa).

The disordered stretch occupies residues 1 to 34; the sequence is MNPFQKNESKETLFSPVSIEEVPPRPPSPPKKPS. Residues 1–57 lie on the Cytoplasmic side of the membrane; that stretch reads MNPFQKNESKETLFSPVSIEEVPPRPPSPPKKPSPTICGSNYPLSIAFIVVNEFCER. The residue at position 9 (S9) is a Phosphoserine. Residue T12 is modified to Phosphothreonine. The segment covering 24 to 33 has biased composition (pro residues); it reads PRPPSPPKKP. S28 is modified (phosphoserine). A helical transmembrane segment spans residues 58–78; that stretch reads FSYYGMKAVLILYFLYFLHWN. Residues 79–83 lie on the Extracellular side of the membrane; sequence EDTST. Residues 84-104 form a helical membrane-spanning segment; it reads SIYHAFSSLCYFTPILGAAIA. Topologically, residues 105-113 are cytoplasmic; the sequence is DSWLGKFKT. The chain crosses the membrane as a helical span at residues 114-134; sequence IIYLSLVYVLGHVIKSLGALP. Residues 135–139 are Extracellular-facing; it reads ILGGQ. A helical transmembrane segment spans residues 140–160; it reads VVHTVLSLIGLSLIALGTGGI. Residues 161–183 are Cytoplasmic-facing; that stretch reads KPCVAAFGGDQFEEKHAEERTRY. The helical transmembrane segment at 184–204 threads the bilayer; the sequence is FSVFYLSINAGSLISTFITPM. Residues 205-217 are Extracellular-facing; it reads LRGDVQCFGEDCY. Residues 218-238 form a helical membrane-spanning segment; it reads ALAFGVPGLLMVIALVVFAMG. Topologically, residues 239-295 are cytoplasmic; sequence SKIYNKPPPEGNIVAQVFKCIWFAISNRFKNRSGDIPKRQHWLDWAAEKYPKQLIMD. Residues 296–316 traverse the membrane as a helical segment; it reads VKALTRVLFLYIPLPMFWALL. The Extracellular portion of the chain corresponds to 317–343; the sequence is DQQGSRWTLQAIRMNRNLGFFVLQPDQ. Residues 344 to 364 traverse the membrane as a helical segment; that stretch reads MQVLNPLLVLIFIPLFDFVIY. Residues 365 to 380 are Cytoplasmic-facing; the sequence is RLVSKCGINFSSLRKM. The helical transmembrane segment at 381–401 threads the bilayer; sequence AVGMILACLAFAVAAAVEIKI. Residues 402 to 611 lie on the Extracellular side of the membrane; that stretch reads NEMAPAQPGP…PANKMSIAWQ (210 aa). An extracellular domain (ECD) region spans residues 402 to 611; sequence NEMAPAQPGP…PANKMSIAWQ (210 aa). N435, N472, N528, N567, and N587 each carry an N-linked (GlcNAc...) asparagine glycan. The helical transmembrane segment at 612–632 threads the bilayer; that stretch reads LPQYALVTAGEVMFSVTGLEF. At 633–643 the chain is on the cytoplasmic side; it reads SYSQAPSSMKS. A helical transmembrane segment spans residues 644 to 664; the sequence is VLQAAWLLTIAVGNIIVLVVA. The Extracellular segment spans residues 665 to 674; it reads QFSGLVQWAE. The chain crosses the membrane as a helical span at residues 675–695; it reads FILFSCLLLVICLIFSIMGYY. The Cytoplasmic portion of the chain corresponds to 696–729; the sequence is YVPVKTEDMRGPADKHIPHIQGNMIKLETKKTKL.

The protein belongs to the major facilitator superfamily. Proton-dependent oligopeptide transporter (POT/PTR) (TC 2.A.17) family. In terms of assembly, interacts (via extracellular domain region) with trypsin. Expressed in kidney. Not detected in intestine. Highly expressed in macrophages.

It is found in the apical cell membrane. Its subcellular location is the cytoplasmic vesicle. The protein localises to the phagosome membrane. It localises to the cell membrane. The enzyme catalyses a dipeptide(out) + 2 H(+)(out) = a dipeptide(in) + 2 H(+)(in). It catalyses the reaction N-acetyl-D-muramoyl-L-alanyl-D-isoglutamine(out) + 3 H(+)(out) = N-acetyl-D-muramoyl-L-alanyl-D-isoglutamine(in) + 3 H(+)(in). The catalysed reaction is glycyl-L-leucine(out) + 2 H(+)(out) = glycyl-L-leucine(in) + 2 H(+)(in). It carries out the reaction glycyl-L-lysine(out) + 2 H(+)(out) = glycyl-L-lysine(in) + 2 H(+)(in). The enzyme catalyses glycyl-L-glutamate(out) + 3 H(+)(out) = glycyl-L-glutamate(in) + 3 H(+)(in). It catalyses the reaction L-alanyl-L-alanine(out) + 2 H(+)(out) = L-alanyl-L-alanine(in) + 2 H(+)(in). The catalysed reaction is an L-amino acid tripeptide(out) + 2 H(+)(out) = an L-amino acid tripeptide(in) + 2 H(+)(in). It carries out the reaction carnosine(out) + 2 H(+)(out) = carnosine(in) + 2 H(+)(in). In terms of biological role, proton-coupled amino-acid transporter that transports oligopeptides of 2 to 4 amino acids with a preference for dipeptides. Transports neutral and anionic dipeptides with a proton to peptide stoichiometry of 2:1 or 3:1. In kidney, involved in the absorption of circulating di- and tripeptides from the glomerular filtrate. Can also transport beta-lactam antibiotics, such as the aminocephalosporin cefadroxil, and other antiviral and anticancer drugs. Transports the dipeptide-like aminopeptidase inhibitor bestatin. Also able to transport carnosine. Involved in innate immunity by promoting the detection of microbial pathogens by NOD-like receptors (NLRs). Mediates transport of bacterial peptidoglycans across the plasma membrane or, in macrophages, the phagosome membrane: catalyzes the transport of certain bacterial peptidoglycans, such as muramyl dipeptide (MDP), the NOD2 ligand. In Homo sapiens (Human), this protein is Solute carrier family 15 member 2.